Here is a 258-residue protein sequence, read N- to C-terminus: MHNDKGDRVVERLLLNCDMGESFGSWRMGLDAEVMPYIDCANIACGYHAGDPGIMRRTVTLALEHGVTIGAHPAYPDLVGFGRRSMACSPEEIRDLLHYQIGALDGICKVLGGRVAYVKPHGALYNDMMADPLKLRTVLEAVAAYDSNLPLMLMATADNRAAQALGDEIGVPLWFEAFADRAYTASGHLLSRRLPGAVHHDPARVVEQAVRLARGETLLADDGSALQLAARTLCVHGDNDSSVAAVRQIRQALDGLEV.

It belongs to the LamB/PxpA family. In terms of assembly, forms a complex composed of PxpA, PxpB and PxpC.

The enzyme catalyses 5-oxo-L-proline + ATP + 2 H2O = L-glutamate + ADP + phosphate + H(+). In terms of biological role, catalyzes the cleavage of 5-oxoproline to form L-glutamate coupled to the hydrolysis of ATP to ADP and inorganic phosphate. The protein is 5-oxoprolinase subunit A 2 of Pseudomonas putida (strain ATCC 47054 / DSM 6125 / CFBP 8728 / NCIMB 11950 / KT2440).